The sequence spans 248 residues: 4-hydroxy-tetrahydrodipicolinate reductase (248 aa).

NAD(+)-binding positions include 8 to 13 (GAKGRV), Asp-34, 76 to 78 (GTT), and 103 to 106 (APNF). His-133 serves as the catalytic Proton donor/acceptor. A (S)-2,3,4,5-tetrahydrodipicolinate-binding site is contributed by His-134. Catalysis depends on Lys-137, which acts as the Proton donor. 143–144 (GT) is a (S)-2,3,4,5-tetrahydrodipicolinate binding site.

It belongs to the DapB family.

It is found in the cytoplasm. It catalyses the reaction (S)-2,3,4,5-tetrahydrodipicolinate + NAD(+) + H2O = (2S,4S)-4-hydroxy-2,3,4,5-tetrahydrodipicolinate + NADH + H(+). The catalysed reaction is (S)-2,3,4,5-tetrahydrodipicolinate + NADP(+) + H2O = (2S,4S)-4-hydroxy-2,3,4,5-tetrahydrodipicolinate + NADPH + H(+). Its pathway is amino-acid biosynthesis; L-lysine biosynthesis via DAP pathway; (S)-tetrahydrodipicolinate from L-aspartate: step 4/4. Functionally, catalyzes the conversion of 4-hydroxy-tetrahydrodipicolinate (HTPA) to tetrahydrodipicolinate. The polypeptide is 4-hydroxy-tetrahydrodipicolinate reductase (Corynebacterium urealyticum (strain ATCC 43042 / DSM 7109)).